We begin with the raw amino-acid sequence, 119 residues long: Putative nitrilase-like protein YIL165C (119 aa).

Residues Met-1–Thr-82 enclose the CN hydrolase domain. The active-site Proton acceptor is the Asp-21.

It belongs to the carbon-nitrogen hydrolase superfamily. Nitrilase family.

The sequence is that of Putative nitrilase-like protein YIL165C from Saccharomyces cerevisiae (strain ATCC 204508 / S288c) (Baker's yeast).